The chain runs to 315 residues: Ribosomal protein L11 methyltransferase (315 aa).

S-adenosyl-L-methionine is bound by residues Thr-152, Gly-185, Asp-207, and Asn-249.

Belongs to the methyltransferase superfamily. PrmA family.

The protein resides in the cytoplasm. The enzyme catalyses L-lysyl-[protein] + 3 S-adenosyl-L-methionine = N(6),N(6),N(6)-trimethyl-L-lysyl-[protein] + 3 S-adenosyl-L-homocysteine + 3 H(+). In terms of biological role, methylates ribosomal protein L11. The protein is Ribosomal protein L11 methyltransferase of Geotalea uraniireducens (strain Rf4) (Geobacter uraniireducens).